The primary structure comprises 513 residues: Cyclin-dependent kinase C-2 (513 aa).

In terms of domain architecture, Protein kinase spans 26 to 325 (FEKLEQIGEG…AKDALDAEYF (300 aa)). ATP is bound by residues 32–40 (IGEGTYGQV) and Lys55. Residue Tyr37 is modified to Phosphotyrosine. The Proton acceptor role is filled by Asp164. A Phosphothreonine modification is found at Thr198. Residues 337 to 513 (LPTYESSHEF…ARNQQYGWQP (177 aa)) form a disordered region. Low complexity predominate over residues 395–404 (AGPNHPMNNN). Residues 434–448 (SGNQTGGYNNQSRGG) are compositionally biased toward polar residues. Composition is skewed to gly residues over residues 461 to 476 (APYG…GYGV) and 483 to 496 (QGGG…GSGR).

Belongs to the protein kinase superfamily. CMGC Ser/Thr protein kinase family. CDC2/CDKX subfamily. Interacts with CYCT1-3. As to expression, highly expressed in flowers. Expressed in seedlings, roots, rosettes and stems.

The enzyme catalyses L-seryl-[protein] + ATP = O-phospho-L-seryl-[protein] + ADP + H(+). The catalysed reaction is L-threonyl-[protein] + ATP = O-phospho-L-threonyl-[protein] + ADP + H(+). It carries out the reaction [DNA-directed RNA polymerase] + ATP = phospho-[DNA-directed RNA polymerase] + ADP + H(+). The sequence is that of Cyclin-dependent kinase C-2 (CDKC-2) from Arabidopsis thaliana (Mouse-ear cress).